The following is a 193-amino-acid chain: dCTP deaminase, dUMP-forming (193 aa).

DCTP-binding positions include 101-106 (KSSLGR), Asp119, 127-129 (TLE), Gln148, Tyr162, and Gln174. Glu129 serves as the catalytic Proton donor/acceptor. The segment at 161–184 (PYGSETTGSHYQGQRGPTPSRSYQ) is disordered.

Belongs to the dCTP deaminase family. In terms of assembly, homotrimer.

The enzyme catalyses dCTP + 2 H2O = dUMP + NH4(+) + diphosphate. It participates in pyrimidine metabolism; dUMP biosynthesis; dUMP from dCTP: step 1/1. Bifunctional enzyme that catalyzes both the deamination of dCTP to dUTP and the hydrolysis of dUTP to dUMP without releasing the toxic dUTP intermediate. This Bifidobacterium animalis subsp. lactis (strain AD011) protein is dCTP deaminase, dUMP-forming.